The primary structure comprises 395 residues: Cysteine synthase 2 (395 aa).

Residues glutamine 6–leucine 22 form a helical membrane-spanning segment. At lysine 83 the chain carries N6-(pyridoxal phosphate)lysine. Residues glycine 228–threonine 232 and serine 335 each bind pyridoxal 5'-phosphate.

Belongs to the cysteine synthase/cystathionine beta-synthase family. The cofactor is pyridoxal 5'-phosphate.

It is found in the mitochondrion. The protein localises to the mitochondrion outer membrane. The enzyme catalyses O-acetyl-L-serine + hydrogen sulfide = L-cysteine + acetate. Its function is as follows. Putative cysteine synthase that catalyzes the conversion of O-acetyl-L-serine (OAS) into cysteine, the last step in the cysteine biosynthesis pathway. However, in contrast to cysteine synthase cys11, this CS-like protein seems not to function in cysteine biosynthesis, at least under normal growth conditions, although the transcript is produced. This chain is Cysteine synthase 2 (cys12), found in Schizosaccharomyces pombe (strain 972 / ATCC 24843) (Fission yeast).